Reading from the N-terminus, the 295-residue chain is ATP synthase gamma chain (295 aa).

This sequence belongs to the ATPase gamma chain family. As to quaternary structure, F-type ATPases have 2 components, CF(1) - the catalytic core - and CF(0) - the membrane proton channel. CF(1) has five subunits: alpha(3), beta(3), gamma(1), delta(1), epsilon(1). CF(0) has three main subunits: a, b and c.

Its subcellular location is the cell inner membrane. Functionally, produces ATP from ADP in the presence of a proton gradient across the membrane. The gamma chain is believed to be important in regulating ATPase activity and the flow of protons through the CF(0) complex. This chain is ATP synthase gamma chain, found in Cytophaga hutchinsonii (strain ATCC 33406 / DSM 1761 / CIP 103989 / NBRC 15051 / NCIMB 9469 / D465).